Consider the following 513-residue polypeptide: ATP synthase subunit alpha (513 aa).

169-176 lines the ATP pocket; the sequence is GDRQIGKT.

It belongs to the ATPase alpha/beta chains family. F-type ATPases have 2 components, CF(1) - the catalytic core - and CF(0) - the membrane proton channel. CF(1) has five subunits: alpha(3), beta(3), gamma(1), delta(1), epsilon(1). CF(0) has three main subunits: a(1), b(2) and c(9-12). The alpha and beta chains form an alternating ring which encloses part of the gamma chain. CF(1) is attached to CF(0) by a central stalk formed by the gamma and epsilon chains, while a peripheral stalk is formed by the delta and b chains.

It is found in the cell inner membrane. It carries out the reaction ATP + H2O + 4 H(+)(in) = ADP + phosphate + 5 H(+)(out). In terms of biological role, produces ATP from ADP in the presence of a proton gradient across the membrane. The alpha chain is a regulatory subunit. In Francisella tularensis subsp. novicida (strain U112), this protein is ATP synthase subunit alpha.